The chain runs to 2184 residues: Genome polyprotein (2184 aa).

A lipid anchor (N-myristoyl glycine; by host) is attached at glycine 2. Topologically, residues 2-1494 (GAQVSTQKTG…HVSRAFICLQ (1493 aa)) are cytoplasmic. The interval 566–582 (FYQSPVEGAIERAIARV) is amphipathic alpha-helix. Active-site for protease 2A activity residues include histidine 871 and aspartate 889. 2 residues coordinate Zn(2+): cysteine 906 and cysteine 908. Catalysis depends on cysteine 960, which acts as the For protease 2A activity. Zn(2+) is bound by residues cysteine 966 and histidine 968. The segment at 1100–1172 (SNGWLKKFTE…EQSAPSQSDQ (73 aa)) is membrane-binding. The segment at 1100-1238 (SNGWLKKFTE…SPGAGKSVAT (139 aa)) is oligomerization. Residues 1121 to 1125 (AIKIQ) are RNA-binding. The region spanning 1204–1360 (EKKMSNYIQF…SMYSQNGKIN (157 aa)) is the SF3 helicase domain. Zn(2+)-binding residues include cysteine 1368, cysteine 1380, and cysteine 1385. The segment at 1368–1385 (CDEECCPVNFKKCCPLVC) adopts a C4-type; degenerate zinc-finger fold. The segment at 1412–1419 (EYNHRHSV) is RNA-binding. The oligomerization stretch occupies residues 1423–1428 (LEALFQ). An intramembrane segment occupies 1495-1510 (ALTTFVSVAGIIYIIY). The Cytoplasmic portion of the chain corresponds to 1511–2184 (KLFAGFQGAY…TLRRKWLDSF (674 aa)). Position 1520 is an O-(5'-phospho-RNA)-tyrosine (tyrosine 1520). A Peptidase C3 domain is found at 1540-1718 (GPAFEFAVAM…FSAALLKHYF (179 aa)). Catalysis depends on for protease 3C activity residues histidine 1579, glutamate 1610, and cysteine 1686. Residues 1949 to 2065 (GHLIAFDYSG…SYPWPIDASL (117 aa)) form the RdRp catalytic domain. Mg(2+)-binding residues include aspartate 1955 and aspartate 2051.

Belongs to the picornaviruses polyprotein family. As to quaternary structure, interacts with capsid protein VP1 and capsid protein VP3 to form heterotrimeric protomers. In terms of assembly, interacts with capsid protein VP0, and capsid protein VP3 to form heterotrimeric protomers. Five protomers subsequently associate to form pentamers which serve as building blocks for the capsid. Interacts with capsid protein VP2, capsid protein VP3 and capsid protein VP4 following cleavage of capsid protein VP0. Interacts with host CXADR. Interacts with capsid protein VP1 and capsid protein VP3 in the mature capsid. As to quaternary structure, interacts with capsid protein VP0 and capsid protein VP1 to form heterotrimeric protomers. Five protomers subsequently associate to form pentamers which serve as building blocks for the capsid. Interacts with capsid protein VP4 in the mature capsid. Interacts with protein 2C; this interaction may be important for virion morphogenesis. In terms of assembly, interacts with capsid protein VP1 and capsid protein VP3. Homodimer. As to quaternary structure, homohexamer; forms a hexameric ring structure with 6-fold symmetry characteristic of AAA+ ATPases. Interacts (via N-terminus) with host RTN3 (via reticulon domain); this interaction is important for viral replication. Interacts with capsid protein VP3; this interaction may be important for virion morphogenesis. In terms of assembly, interacts with protein 3CD. Homodimer. Interacts with host GBF1. Interacts (via GOLD domain) with host ACBD3 (via GOLD domain); this interaction allows the formation of a viral protein 3A/ACBD3 heterotetramer with a 2:2 stoichiometry, which will stimulate the recruitment of host PI4KB in order to synthesize PI4P at the viral RNA replication sites. As to quaternary structure, interacts with RNA-directed RNA polymerase. In terms of assembly, interacts with protein 3AB and with RNA-directed RNA polymerase. Interacts with Viral protein genome-linked and with protein 3CD. The cofactor is Mg(2+). Specific enzymatic cleavages in vivo by the viral proteases yield processing intermediates and the mature proteins. In terms of processing, myristoylation is required for the formation of pentamers during virus assembly. Further assembly of 12 pentamers and a molecule of genomic RNA generates the provirion. Post-translationally, during virion maturation, immature virions are rendered infectious following cleavage of VP0 into VP4 and VP2. This maturation seems to be an autocatalytic event triggered by the presence of RNA in the capsid and it is followed by a conformational change infectious virion. Myristoylation is required during RNA encapsidation and formation of the mature virus particle. In terms of processing, VPg is uridylylated by the polymerase into VPg-pUpU. This acts as a nucleotide-peptide primer for the genomic RNA replication.

Its subcellular location is the virion. It is found in the host cytoplasm. The protein localises to the host cytoplasmic vesicle membrane. The protein resides in the host nucleus. The catalysed reaction is a ribonucleoside 5'-triphosphate + H2O = a ribonucleoside 5'-diphosphate + phosphate + H(+). The enzyme catalyses Selective cleavage of Tyr-|-Gly bond in the picornavirus polyprotein.. It carries out the reaction RNA(n) + a ribonucleoside 5'-triphosphate = RNA(n+1) + diphosphate. It catalyses the reaction Selective cleavage of Gln-|-Gly bond in the poliovirus polyprotein. In other picornavirus reactions Glu may be substituted for Gln, and Ser or Thr for Gly.. Replication or transcription is subject to high level of random mutations by the nucleotide analog ribavirin. Its function is as follows. Forms an icosahedral capsid of pseudo T=3 symmetry with capsid proteins VP2 and VP3. The capsid is 300 Angstroms in diameter, composed of 60 copies of each capsid protein and enclosing the viral positive strand RNA genome. Capsid protein VP1 mainly forms the vertices of the capsid. Capsid protein VP1 interacts with host CXADR to provide virion attachment to target host cells. This attachment induces virion internalization. Tyrosine kinases are probably involved in the entry process. After binding to its receptor, the capsid undergoes conformational changes. Capsid protein VP1 N-terminus (that contains an amphipathic alpha-helix) and capsid protein VP4 are externalized. Together, they shape a pore in the host membrane through which viral genome is translocated to host cell cytoplasm. In terms of biological role, forms an icosahedral capsid of pseudo T=3 symmetry with capsid proteins VP2 and VP3. The capsid is 300 Angstroms in diameter, composed of 60 copies of each capsid protein and enclosing the viral positive strand RNA genome. Functionally, lies on the inner surface of the capsid shell. After binding to the host receptor, the capsid undergoes conformational changes. Capsid protein VP4 is released, Capsid protein VP1 N-terminus is externalized, and together, they shape a pore in the host membrane through which the viral genome is translocated into the host cell cytoplasm. Component of immature procapsids, which is cleaved into capsid proteins VP4 and VP2 after maturation. Allows the capsid to remain inactive before the maturation step. Its function is as follows. Cysteine protease that cleaves viral polyprotein and specific host proteins. It is responsible for the autocatalytic cleavage between the P1 and P2 regions, which is the first cleavage occurring in the polyprotein. Also cleaves the host translation initiation factor EIF4G1, in order to shut down the capped cellular mRNA translation. Inhibits the host nucleus-cytoplasm protein and RNA trafficking by cleaving host members of the nuclear pores. Counteracts stress granule formation probably by antagonizing its assembly or promoting its dissassembly. Cleaves and inhibits host IFIH1/MDA5, thereby inhibiting the type-I IFN production and the establishment of the antiviral state. Cleaves and inhibits host MAVS, thereby inhibiting the type-I IFN production and the establishment of the antiviral state. In terms of biological role, plays an essential role in the virus replication cycle by acting as a viroporin. Creates a pore in the host endoplasmic reticulum and as a consequence releases Ca2+ in the cytoplasm of infected cell. In turn, high levels of cytoplasmic calcium may trigger membrane trafficking and transport of viral ER-associated proteins to viroplasms, sites of viral genome replication. Functionally, induces and associates with structural rearrangements of intracellular membranes. Displays RNA-binding, nucleotide binding and NTPase activities. May play a role in virion morphogenesis and viral RNA encapsidation by interacting with the capsid protein VP3. Localizes the viral replication complex to the surface of membranous vesicles. Together with protein 3CD binds the Cis-Active RNA Element (CRE) which is involved in RNA synthesis initiation. Acts as a cofactor to stimulate the activity of 3D polymerase, maybe through a nucleid acid chaperone activity. Its function is as follows. Localizes the viral replication complex to the surface of membranous vesicles. It inhibits host cell endoplasmic reticulum-to-Golgi apparatus transport and causes the disassembly of the Golgi complex, possibly through GBF1 interaction. This would result in depletion of MHC, trail receptors and IFN receptors at the host cell surface. Plays an essential role in viral RNA replication by recruiting ACBD3 and PI4KB at the viral replication sites, thereby allowing the formation of the rearranged membranous structures where viral replication takes place. In terms of biological role, acts as a primer for viral RNA replication and remains covalently bound to viral genomic RNA. VPg is uridylylated prior to priming replication into VPg-pUpU. The oriI viral genomic sequence may act as a template for this. The VPg-pUpU is then used as primer on the genomic RNA poly(A) by the RNA-dependent RNA polymerase to replicate the viral genome. During genome replication, the VPg-RNA linkage is removed by the host TDP2, thereby accelerating replication. During the late stage of the replication cycle, host TDP2 is excluded from sites of viral RNA synthesis and encapsidation, allowing for the generation of progeny virions. Functionally, involved in the viral replication complex and viral polypeptide maturation. It exhibits protease activity with a specificity and catalytic efficiency that is different from protease 3C. Protein 3CD lacks polymerase activity. Protein 3CD binds to the 5'UTR of the viral genome. Replicates the viral genomic RNA on the surface of intracellular membranes. May form linear arrays of subunits that propagate along a strong head-to-tail interaction called interface-I. Covalently attaches UMP to a tyrosine of VPg, which is used to prime RNA synthesis. The positive stranded RNA genome is first replicated at virus induced membranous vesicles, creating a dsRNA genomic replication form. This dsRNA is then used as template to synthesize positive stranded RNA genomes. ss(+)RNA genomes are either translated, replicated or encapsidated. Its function is as follows. Major viral protease that mediates proteolytic processing of the polyprotein. Cleaves host EIF5B, contributing to host translation shutoff. Also cleaves host PABPC1, contributing to host translation shutoff. Cleaves host NLRP1, triggers host N-glycine-mediated degradation of the autoinhibitory NLRP1 N-terminal fragment. This chain is Genome polyprotein, found in Coxsackievirus B6 (strain Schmitt).